The primary structure comprises 304 residues: Serine protease 30 (304 aa).

The signal sequence occupies residues 1 to 21; it reads MESWARCIFLLLLQILTGGRG. Positions 22–30 are cleaved as a propeptide — activation peptide; the sequence is DILHSGAGK. Positions 31 to 271 constitute a Peptidase S1 domain; it reads IVGGQDAPEG…YVDWIQRTLA (241 aa). Residues cysteine 57 and cysteine 73 are joined by a disulfide bond. Histidine 72 serves as the catalytic Charge relay system. The N-linked (GlcNAc...) asparagine glycan is linked to asparagine 79. Aspartate 122 functions as the Charge relay system in the catalytic mechanism. Disulfide bonds link cysteine 155–cysteine 229, cysteine 185–cysteine 208, and cysteine 219–cysteine 247. Catalysis depends on serine 223, which acts as the Charge relay system. N-linked (GlcNAc...) asparagine glycosylation is found at asparagine 232 and asparagine 273. The GPI-anchor amidated serine moiety is linked to residue serine 275. Residues 276 to 304 constitute a propeptide, removed in mature form; that stretch reads DAYGCRSRASGAYPALLLVLLAFALPESL.

The protein belongs to the peptidase S1 family. In terms of tissue distribution, expressed predominantly in kidney, small intestine and stomach and moderately in thymus, lung, spleen, testis and skin. In the kidney, expressed mainly in collecting duct of renal medulla and cortex.

The protein resides in the cell membrane. Its activity is regulated as follows. Inhibited by aprotinin, leupeptin, benzamidine and soybean trypsin inhibitor. Partially inhibited by PMSF and DFP. Selectively cleaves synthetic peptide substrates of trypsin. Activates the epithelial sodium channel ENaC. This Rattus norvegicus (Rat) protein is Serine protease 30 (Prss30).